A 108-amino-acid chain; its full sequence is UPF0145 protein LCA_1282 (108 aa).

This sequence belongs to the UPF0145 family.

The protein is UPF0145 protein LCA_1282 of Latilactobacillus sakei subsp. sakei (strain 23K) (Lactobacillus sakei subsp. sakei).